Here is a 601-residue protein sequence, read N- to C-terminus: DNA mismatch repair protein MutL (601 aa).

This sequence belongs to the DNA mismatch repair MutL/HexB family.

Its function is as follows. This protein is involved in the repair of mismatches in DNA. It is required for dam-dependent methyl-directed DNA mismatch repair. May act as a 'molecular matchmaker', a protein that promotes the formation of a stable complex between two or more DNA-binding proteins in an ATP-dependent manner without itself being part of a final effector complex. This chain is DNA mismatch repair protein MutL, found in Listeria monocytogenes serovar 1/2a (strain ATCC BAA-679 / EGD-e).